Consider the following 842-residue polypeptide: Elongation factor 2 (842 aa).

A tr-type G domain is found at 17–346; it reads TNVRNMSVIA…MIVMHLPSPV (330 aa). Residues 26–33, 158–161, and 213–215 each bind GTP; these read AHVDHGKS, NKVD, and SGL. H699 carries the diphthamide modification.

This sequence belongs to the TRAFAC class translation factor GTPase superfamily. Classic translation factor GTPase family. EF-G/EF-2 subfamily.

Its subcellular location is the cytoplasm. The enzyme catalyses GTP + H2O = GDP + phosphate + H(+). In terms of biological role, catalyzes the GTP-dependent ribosomal translocation step during translation elongation. During this step, the ribosome changes from the pre-translocational (PRE) to the post-translocational (POST) state as the newly formed A-site-bound peptidyl-tRNA and P-site-bound deacylated tRNA move to the P and E sites, respectively. Catalyzes the coordinated movement of the two tRNA molecules, the mRNA and conformational changes in the ribosome. This is Elongation factor 2 (EFT1) from Candida glabrata (strain ATCC 2001 / BCRC 20586 / JCM 3761 / NBRC 0622 / NRRL Y-65 / CBS 138) (Yeast).